The primary structure comprises 392 residues: Methylthioribose-1-phosphate isomerase (392 aa).

Asp-268 serves as the catalytic Proton donor.

The protein belongs to the eIF-2B alpha/beta/delta subunits family. MtnA subfamily.

Its subcellular location is the cytoplasm. It is found in the nucleus. The enzyme catalyses 5-(methylsulfanyl)-alpha-D-ribose 1-phosphate = 5-(methylsulfanyl)-D-ribulose 1-phosphate. The protein operates within amino-acid biosynthesis; L-methionine biosynthesis via salvage pathway; L-methionine from S-methyl-5-thio-alpha-D-ribose 1-phosphate: step 1/6. In terms of biological role, catalyzes the interconversion of methylthioribose-1-phosphate (MTR-1-P) into methylthioribulose-1-phosphate (MTRu-1-P). The sequence is that of Methylthioribose-1-phosphate isomerase from Ajellomyces capsulatus (strain G186AR / H82 / ATCC MYA-2454 / RMSCC 2432) (Darling's disease fungus).